Reading from the N-terminus, the 991-residue chain is 5'-3' exoribonuclease 2 (991 aa).

The Nuclear localization signal motif lies at 264-268 (TKKTK). Basic and acidic residues predominate over residues 404 to 418 (RRNENYRRRQQRESN). 3 disordered regions span residues 404–461 (RRNE…TQKI), 547–582 (SIESSTPVVHPIDTKVSNVGQKRKAPDSTEENENTD), and 872–991 (AERS…NGYY). Low complexity predominate over residues 433–452 (SVETQSTEVVTSSKSTSVDT). 2 stretches are compositionally biased toward low complexity: residues 878–889 (SRRNNGNSYRGG) and 896–910 (RRSYQSQSYSSRQSY). Positions 926–938 (WSGNGNFPRSNAS) are enriched in polar residues. Residues 946 to 958 (EGYGGRSRGGGYS) are compositionally biased toward gly residues. Residues 980 to 991 (ESYNNNNRNGYY) show a composition bias toward polar residues.

The protein belongs to the 5'-3' exonuclease family. XRN2/RAT1 subfamily. In terms of assembly, interacts with din1/rai1; the interaction is direct, stabilizes dhp1 protein structure and may stimulate its exoribonuclease activity. The interaction also stimulates din1 pyrophosphohydrolase activity, probably by recruiting it to mRNA substrates.

The protein localises to the nucleus. Functionally, possesses 5'-&gt;3' exoribonuclease activity. Required for the processing of nuclear mRNA and rRNA precursors. May promote the termination of transcription by RNA polymerase II. Essential for vegetative cell growth and chromosome segregation. This chain is 5'-3' exoribonuclease 2 (dhp1), found in Schizosaccharomyces pombe (strain 972 / ATCC 24843) (Fission yeast).